We begin with the raw amino-acid sequence, 266 residues long: Type III pantothenate kinase (266 aa).

6 to 13 (DVGNSHTV) serves as a coordination point for ATP. 112-115 (GIDR) contacts substrate. Residue Asp-114 is the Proton acceptor of the active site. Residue Asp-134 participates in K(+) binding. Residue Thr-137 participates in ATP binding. Thr-190 serves as a coordination point for substrate.

Belongs to the type III pantothenate kinase family. In terms of assembly, homodimer. Requires NH4(+) as cofactor. K(+) serves as cofactor.

It localises to the cytoplasm. The catalysed reaction is (R)-pantothenate + ATP = (R)-4'-phosphopantothenate + ADP + H(+). Its pathway is cofactor biosynthesis; coenzyme A biosynthesis; CoA from (R)-pantothenate: step 1/5. Functionally, catalyzes the phosphorylation of pantothenate (Pan), the first step in CoA biosynthesis. The polypeptide is Type III pantothenate kinase (Desulfotalea psychrophila (strain LSv54 / DSM 12343)).